Consider the following 81-residue polypeptide: Cytotoxin 8 (81 aa).

A signal peptide spans 1–21 (MKTLLLTLVVVTIVCLDLGYT). 4 cysteine pairs are disulfide-bonded: Cys24/Cys42, Cys35/Cys59, Cys63/Cys74, and Cys75/Cys80.

This sequence belongs to the three-finger toxin family. Short-chain subfamily. Type IA cytotoxin sub-subfamily. In terms of assembly, monomer in solution; Homodimer and oligomer in the presence of negatively charged lipids forming a pore with a size ranging between 20 and 30 Angstroms. Expressed by the venom gland.

Its subcellular location is the secreted. It is found in the target cell membrane. Its function is as follows. Shows cytolytic activity on many different cells by forming pore in lipid membranes. In vivo, increases heart rate or kills the animal by cardiac arrest. In addition, it binds to heparin with high affinity, interacts with Kv channel-interacting protein 1 (KCNIP1) in a calcium-independent manner, and binds to integrin alpha-V/beta-3 (ITGAV/ITGB3) with moderate affinity. This Naja atra (Chinese cobra) protein is Cytotoxin 8.